The chain runs to 180 residues: Large ribosomal subunit protein uL6 (180 aa).

It belongs to the universal ribosomal protein uL6 family. As to quaternary structure, part of the 50S ribosomal subunit.

In terms of biological role, this protein binds to the 23S rRNA, and is important in its secondary structure. It is located near the subunit interface in the base of the L7/L12 stalk, and near the tRNA binding site of the peptidyltransferase center. This is Large ribosomal subunit protein uL6 from Clostridium beijerinckii (strain ATCC 51743 / NCIMB 8052) (Clostridium acetobutylicum).